A 496-amino-acid polypeptide reads, in one-letter code: Membrane-bound lytic murein transglycosylase F (496 aa).

The N-terminal stretch at 1-31 (MPIFSTRVLTYLRCIFRLFIGLMLLLTLVGC) is a signal peptide. The non-LT domain stretch occupies residues 32 to 271 (DFYTPSSQLE…KLDEKYFGHV (240 aa)). The LT domain stretch occupies residues 273 to 496 (NFDFVDTRTF…AEVVKQITLR (224 aa)). The active site involves Glu-316. The segment at 464–485 (HRREELDEDDSSEPQSTERPTV) is disordered.

This sequence in the N-terminal section; belongs to the bacterial solute-binding protein 3 family. In the C-terminal section; belongs to the transglycosylase Slt family.

It is found in the cell outer membrane. It catalyses the reaction Exolytic cleavage of the (1-&gt;4)-beta-glycosidic linkage between N-acetylmuramic acid (MurNAc) and N-acetylglucosamine (GlcNAc) residues in peptidoglycan, from either the reducing or the non-reducing ends of the peptidoglycan chains, with concomitant formation of a 1,6-anhydrobond in the MurNAc residue.. In terms of biological role, murein-degrading enzyme that degrades murein glycan strands and insoluble, high-molecular weight murein sacculi, with the concomitant formation of a 1,6-anhydromuramoyl product. Lytic transglycosylases (LTs) play an integral role in the metabolism of the peptidoglycan (PG) sacculus. Their lytic action creates space within the PG sacculus to allow for its expansion as well as for the insertion of various structures such as secretion systems and flagella. This chain is Membrane-bound lytic murein transglycosylase F, found in Aeromonas salmonicida (strain A449).